Reading from the N-terminus, the 358-residue chain is Aminomethyltransferase (358 aa).

Belongs to the GcvT family. In terms of assembly, the glycine cleavage system is composed of four proteins: P, T, L and H.

The catalysed reaction is N(6)-[(R)-S(8)-aminomethyldihydrolipoyl]-L-lysyl-[protein] + (6S)-5,6,7,8-tetrahydrofolate = N(6)-[(R)-dihydrolipoyl]-L-lysyl-[protein] + (6R)-5,10-methylene-5,6,7,8-tetrahydrofolate + NH4(+). The glycine cleavage system catalyzes the degradation of glycine. The polypeptide is Aminomethyltransferase (Francisella tularensis subsp. holarctica (strain FTNF002-00 / FTA)).